A 299-amino-acid polypeptide reads, in one-letter code: Glycine--tRNA ligase alpha subunit (299 aa).

Belongs to the class-II aminoacyl-tRNA synthetase family. Tetramer of two alpha and two beta subunits.

The protein localises to the cytoplasm. The enzyme catalyses tRNA(Gly) + glycine + ATP = glycyl-tRNA(Gly) + AMP + diphosphate. The protein is Glycine--tRNA ligase alpha subunit of Laribacter hongkongensis (strain HLHK9).